Here is a 610-residue protein sequence, read N- to C-terminus: MPEAPTAKTAPAYGYAPGAHAEALEFIEHVTANAGQVQRRVLGEILAQNAPAEYLRRYGIPGSPDVVDAFRRLVPLVTYEGLQPDILRIANGDTSPIFSGKPISEFLTSSGTSGGERKLMPTIADEMNRRSLLYSLLMPVMSQSVSGLDKGKAMYLLFVKAESRTPGGLAARPVLTSYYRSRQFLDRPRDPYTSYTSPDEAILCVDSYQSMYAQLLCGLVHRADVLRVGAVFASGFLRAIHFLEKHWARLCHDIRTGELDPEITDRVVRDAVGRVLRADPALADAIEDECARASWEGIIRRLWPRTKYIDVIVTGTMSQYIPTLEFYGGGLPLTCTMYASSECYFGLNLNPMCKPSDVAYTLIPTMCYYEFLPVNCNNATAEASHRDLVDLVDVKLGHEYELVVTTYSGLYRYRVGDVLRVAGFKNKAPMFSFVRRQNVALSVDSDKTDETELHAAVSGAVQHLAPFGASLVEYTSYADAATIPGHYVLFWELRAGSTAVPASVFEECCLSVEEALNSVYRQGRACDRSIGPLEIRVVAEGTFDKLMDYAISRGASINQYKAPRCVRPGPVVELLDARVQGKYFSPKCPKWSPGNKQWNKSKDLVGKGDA.

Belongs to the IAA-amido conjugating enzyme family. In terms of tissue distribution, expressed in flowers.

May catalyze the synthesis of indole-3-acetic acid (IAA)-amino acid conjugates, providing a mechanism for the plant to cope with the presence of excess auxin. This is Probable indole-3-acetic acid-amido synthetase GH3.1 (GH3.1) from Oryza sativa subsp. japonica (Rice).